The primary structure comprises 712 residues: U11/U12 small nuclear ribonucleoprotein 48 kDa protein (712 aa).

Residues 98–125 form a CHHC U11-48K-type zinc finger; sequence FVRCPFDSNHFMPPEALFLHSLRCPNTL. Zn(2+) is bound by residues C101, H107, H117, and C121. The segment at 562–712 is disordered; sequence QSRSPIGNDQ…EDRYIPTEKE (151 aa). Composition is skewed to basic and acidic residues over residues 585-595, 603-614, 629-663, 672-693, and 702-712; these read KQWKGENRADI, QNSDKVKRHDEY, KHSDRRDDKLRDRRKDKHNDRRDDEFTRTKRHSIE, SSREKSSSDYKTKRDDPYDRRS, and FEDRYIPTEKE.

In terms of assembly, component of the U11/U12 snRNPs that are part of the U12-type spliceosome. Not found in the major spliceosome.

The protein resides in the nucleus. Its function is as follows. Likely involved in U12-type 5' splice site recognition. This Arabidopsis thaliana (Mouse-ear cress) protein is U11/U12 small nuclear ribonucleoprotein 48 kDa protein (SNRNP48).